We begin with the raw amino-acid sequence, 483 residues long: Cobyric acid synthase (483 aa).

The GATase cobBQ-type domain maps to 252-430 (ALQVVAVAYP…LHRLFDSGPF (179 aa)). Cys-333 serves as the catalytic Nucleophile. The active site involves His-422.

It belongs to the CobB/CobQ family. CobQ subfamily.

The protein operates within cofactor biosynthesis; adenosylcobalamin biosynthesis. Catalyzes amidations at positions B, D, E, and G on adenosylcobyrinic A,C-diamide. NH(2) groups are provided by glutamine, and one molecule of ATP is hydrogenolyzed for each amidation. The protein is Cobyric acid synthase of Halorhodospira halophila (strain DSM 244 / SL1) (Ectothiorhodospira halophila (strain DSM 244 / SL1)).